The following is an 82-amino-acid chain: Cytochrome b559 subunit alpha (82 aa).

Residues 22-36 traverse the membrane as a helical segment; the sequence is VIHAITLPSIFLAGF. H24 lines the heme pocket.

It belongs to the PsbE/PsbF family. As to quaternary structure, heterodimer of an alpha subunit and a beta subunit. PSII is composed of 1 copy each of membrane proteins PsbA, PsbB, PsbC, PsbD, PsbE, PsbF, PsbH, PsbI, PsbJ, PsbK, PsbL, PsbM, PsbT, PsbX, PsbY, PsbZ, Psb30/Ycf12, peripheral proteins PsbO, CyanoQ (PsbQ), PsbU, PsbV and a large number of cofactors. It forms dimeric complexes. Requires heme b as cofactor.

The protein localises to the cellular thylakoid membrane. Its function is as follows. This b-type cytochrome is tightly associated with the reaction center of photosystem II (PSII). PSII is a light-driven water:plastoquinone oxidoreductase that uses light energy to abstract electrons from H(2)O, generating O(2) and a proton gradient subsequently used for ATP formation. It consists of a core antenna complex that captures photons, and an electron transfer chain that converts photonic excitation into a charge separation. This Synechococcus sp. (strain WH7803) protein is Cytochrome b559 subunit alpha.